The sequence spans 70 residues: Large ribosomal subunit protein eL38 (70 aa).

It belongs to the eukaryotic ribosomal protein eL38 family.

The polypeptide is Large ribosomal subunit protein eL38 (RpL38) (Timarcha balearica).